The following is a 537-amino-acid chain: Protein swallow (537 aa).

A disordered region spans residues 344-406 (QPNAGKPKKN…SESSHPSSND (63 aa)). Low complexity-rich tracts occupy residues 371-383 (NGNG…HSSS) and 392-406 (AAPN…SSND).

As to quaternary structure, may be constituted of a homo- or heterodimer.

Its subcellular location is the nucleus. Its function is as follows. Has a role in localizing bicoid mRNA at the anterior margin of the oocyte during oogenesis, and a poorly characterized role in nuclear divisions in early embryogenesis. In Drosophila pseudoobscura pseudoobscura (Fruit fly), this protein is Protein swallow (swa).